The following is a 138-amino-acid chain: Probable lactoylglutathione lyase (138 aa).

The VOC domain maps to 5–129; sequence RILHTMLRVG…DGYMIELIQN (125 aa). Histidine 8 is a Ni(2+) binding site. Residue arginine 12 participates in substrate binding. Glutamate 59 provides a ligand contact to Ni(2+). Residues asparagine 63 and histidine 77 each coordinate substrate. Positions 77 and 125 each coordinate Ni(2+). Residue glutamate 125 is the Proton donor/acceptor of the active site.

It belongs to the glyoxalase I family. Ni(2+) is required as a cofactor.

The enzyme catalyses (R)-S-lactoylglutathione = methylglyoxal + glutathione. The protein operates within secondary metabolite metabolism; methylglyoxal degradation; (R)-lactate from methylglyoxal: step 1/2. Functionally, catalyzes the conversion of hemimercaptal, formed from methylglyoxal and glutathione, to S-lactoylglutathione. The polypeptide is Probable lactoylglutathione lyase (gloA) (Vibrio parahaemolyticus serotype O3:K6 (strain RIMD 2210633)).